A 427-amino-acid chain; its full sequence is Serine--tRNA ligase (427 aa).

Position 233–235 (233–235 (TAE)) interacts with L-serine. An ATP-binding site is contributed by 264–266 (RSE). Residue Glu-287 participates in L-serine binding. ATP is bound at residue 351–354 (EISS). Ser-386 is a binding site for L-serine.

This sequence belongs to the class-II aminoacyl-tRNA synthetase family. Type-1 seryl-tRNA synthetase subfamily. Homodimer. The tRNA molecule binds across the dimer.

It localises to the cytoplasm. The enzyme catalyses tRNA(Ser) + L-serine + ATP = L-seryl-tRNA(Ser) + AMP + diphosphate + H(+). It carries out the reaction tRNA(Sec) + L-serine + ATP = L-seryl-tRNA(Sec) + AMP + diphosphate + H(+). It functions in the pathway aminoacyl-tRNA biosynthesis; selenocysteinyl-tRNA(Sec) biosynthesis; L-seryl-tRNA(Sec) from L-serine and tRNA(Sec): step 1/1. Functionally, catalyzes the attachment of serine to tRNA(Ser). Is also able to aminoacylate tRNA(Sec) with serine, to form the misacylated tRNA L-seryl-tRNA(Sec), which will be further converted into selenocysteinyl-tRNA(Sec). The polypeptide is Serine--tRNA ligase (Thiobacillus denitrificans (strain ATCC 25259 / T1)).